Here is a 159-residue protein sequence, read N- to C-terminus: Cytochrome c-type biogenesis protein CcmE (159 aa).

Over 1-8 (MHPIRKKR) the chain is Cytoplasmic. A helical; Signal-anchor for type II membrane protein membrane pass occupies residues 9-29 (LTIVLFLVAGIAIAVGLTTYA). Residues 30–159 (LRQNINLFYD…VEKAAETTAY (130 aa)) are Periplasmic-facing. Heme contacts are provided by histidine 124 and tyrosine 128. A disordered region spans residues 135-159 (EALERSSKGQHKSADVEKAAETTAY). Residues 136–159 (ALERSSKGQHKSADVEKAAETTAY) are compositionally biased toward basic and acidic residues.

The protein belongs to the CcmE/CycJ family.

Its subcellular location is the cell inner membrane. In terms of biological role, heme chaperone required for the biogenesis of c-type cytochromes. Transiently binds heme delivered by CcmC and transfers the heme to apo-cytochromes in a process facilitated by CcmF and CcmH. The chain is Cytochrome c-type biogenesis protein CcmE from Marinobacter nauticus (strain ATCC 700491 / DSM 11845 / VT8) (Marinobacter aquaeolei).